Consider the following 178-residue polypeptide: Hypoxanthine-guanine phosphoribosyltransferase (178 aa).

Positions 46 and 47 each coordinate diphosphate. Residue Asp103 coordinates Mg(2+). The active-site Proton acceptor is Asp106. Residues Lys134, 155–156, and Asp162 each bind GMP; that span reads FL. Arg168 serves as a coordination point for diphosphate.

The protein belongs to the purine/pyrimidine phosphoribosyltransferase family. Requires Mg(2+) as cofactor.

Its subcellular location is the cytoplasm. The catalysed reaction is IMP + diphosphate = hypoxanthine + 5-phospho-alpha-D-ribose 1-diphosphate. It catalyses the reaction GMP + diphosphate = guanine + 5-phospho-alpha-D-ribose 1-diphosphate. Its pathway is purine metabolism; IMP biosynthesis via salvage pathway; IMP from hypoxanthine: step 1/1. The protein operates within purine metabolism; GMP biosynthesis via salvage pathway; GMP from guanine: step 1/1. In terms of biological role, purine salvage pathway enzyme that catalyzes the transfer of the ribosyl-5-phosphate group from 5-phospho-alpha-D-ribose 1-diphosphate (PRPP) to the N9 position of the 6-oxopurines hypoxanthine and guanine to form the corresponding ribonucleotides IMP (inosine 5'-monophosphate) and GMP (guanosine 5'-monophosphate), with the release of PPi. The chain is Hypoxanthine-guanine phosphoribosyltransferase (hpt) from Aquifex aeolicus (strain VF5).